Reading from the N-terminus, the 123-residue chain is Small ribosomal subunit protein uS12 (123 aa).

At D89 the chain carries 3-methylthioaspartic acid. Residues 104–123 are disordered; sequence SVGVKDRKKSRSKYGAKRPK. A compositionally biased stretch (basic residues) spans 109 to 123; it reads DRKKSRSKYGAKRPK.

It belongs to the universal ribosomal protein uS12 family. In terms of assembly, part of the 30S ribosomal subunit. Contacts proteins S8 and S17. May interact with IF1 in the 30S initiation complex.

Functionally, with S4 and S5 plays an important role in translational accuracy. Interacts with and stabilizes bases of the 16S rRNA that are involved in tRNA selection in the A site and with the mRNA backbone. Located at the interface of the 30S and 50S subunits, it traverses the body of the 30S subunit contacting proteins on the other side and probably holding the rRNA structure together. The combined cluster of proteins S8, S12 and S17 appears to hold together the shoulder and platform of the 30S subunit. In Pelobacter propionicus (strain DSM 2379 / NBRC 103807 / OttBd1), this protein is Small ribosomal subunit protein uS12.